Reading from the N-terminus, the 191-residue chain is Small ribosomal subunit protein uS5 (191 aa).

The interval 1–20 (MAGERERGGRERSRDREERD) is disordered. One can recognise an S5 DRBM domain in the interval 23–86 (FVDKLVHINR…ESAKRNLTRV (64 aa)).

This sequence belongs to the universal ribosomal protein uS5 family. As to quaternary structure, part of the 30S ribosomal subunit. Contacts proteins S4 and S8.

In terms of biological role, with S4 and S12 plays an important role in translational accuracy. Its function is as follows. Located at the back of the 30S subunit body where it stabilizes the conformation of the head with respect to the body. This is Small ribosomal subunit protein uS5 from Nitrobacter winogradskyi (strain ATCC 25391 / DSM 10237 / CIP 104748 / NCIMB 11846 / Nb-255).